A 790-amino-acid polypeptide reads, in one-letter code: Endonuclease MutS2 (790 aa).

Residue 334–341 coordinates ATP; sequence GPNTGGKT. The Smr domain occupies 715-790; sequence IDVRGQNLEE…GMGVTIVHLK (76 aa).

The protein belongs to the DNA mismatch repair MutS family. MutS2 subfamily. In terms of assembly, homodimer. Binds to stalled ribosomes, contacting rRNA.

Its function is as follows. Endonuclease that is involved in the suppression of homologous recombination and thus may have a key role in the control of bacterial genetic diversity. Acts as a ribosome collision sensor, splitting the ribosome into its 2 subunits. Detects stalled/collided 70S ribosomes which it binds and splits by an ATP-hydrolysis driven conformational change. Acts upstream of the ribosome quality control system (RQC), a ribosome-associated complex that mediates the extraction of incompletely synthesized nascent chains from stalled ribosomes and their subsequent degradation. Probably generates substrates for RQC. This Alkaliphilus oremlandii (strain OhILAs) (Clostridium oremlandii (strain OhILAs)) protein is Endonuclease MutS2.